A 360-amino-acid polypeptide reads, in one-letter code: Photosystem II protein D1 (360 aa).

3 helical membrane-spanning segments follow: residues 29–46, 118–133, and 142–156; these read YIGW…TATC, HFLI…EWEL, and WICV…AATA. Histidine 118 lines the chlorophyll a pocket. Position 126 (tyrosine 126) interacts with pheophytin a. [CaMn4O5] cluster contacts are provided by aspartate 170 and glutamate 189. A helical transmembrane segment spans residues 197 to 218; that stretch reads FHMAGVAGVFGGALFSAMHGSL. Position 198 (histidine 198) interacts with chlorophyll a. A quinone-binding positions include histidine 215 and 264 to 265; that span reads SF. Residue histidine 215 coordinates Fe cation. Histidine 272 serves as a coordination point for Fe cation. Residues 274–288 form a helical membrane-spanning segment; sequence FLGAWPVVGIWLTAI. [CaMn4O5] cluster contacts are provided by histidine 332, glutamate 333, aspartate 342, and alanine 344. A propeptide spanning residues 345 to 360 is cleaved from the precursor; it reads SNSVVPVALTAPSVEA.

The protein belongs to the reaction center PufL/M/PsbA/D family. In terms of assembly, PSII is composed of 1 copy each of membrane proteins PsbA, PsbB, PsbC, PsbD, PsbE, PsbF, PsbH, PsbI, PsbJ, PsbK, PsbL, PsbM, PsbT, PsbX, PsbY, PsbZ, Psb30/Ycf12, at least 3 peripheral proteins of the oxygen-evolving complex and a large number of cofactors. It forms dimeric complexes. The D1/D2 heterodimer binds P680, chlorophylls that are the primary electron donor of PSII, and subsequent electron acceptors. It shares a non-heme iron and each subunit binds pheophytin, quinone, additional chlorophylls, carotenoids and lipids. D1 provides most of the ligands for the Mn4-Ca-O5 cluster of the oxygen-evolving complex (OEC). There is also a Cl(-1) ion associated with D1 and D2, which is required for oxygen evolution. The PSII complex binds additional chlorophylls, carotenoids and specific lipids. serves as cofactor. Post-translationally, tyr-161 forms a radical intermediate that is referred to as redox-active TyrZ, YZ or Y-Z. In terms of processing, C-terminally processed by CTPA; processing is essential to allow assembly of the oxygen-evolving complex and thus photosynthetic growth.

It localises to the plastid. The protein resides in the chloroplast thylakoid membrane. It catalyses the reaction 2 a plastoquinone + 4 hnu + 2 H2O = 2 a plastoquinol + O2. Functionally, photosystem II (PSII) is a light-driven water:plastoquinone oxidoreductase that uses light energy to abstract electrons from H(2)O, generating O(2) and a proton gradient subsequently used for ATP formation. It consists of a core antenna complex that captures photons, and an electron transfer chain that converts photonic excitation into a charge separation. The D1/D2 (PsbA/PsbD) reaction center heterodimer binds P680, the primary electron donor of PSII as well as several subsequent electron acceptors. The sequence is that of Photosystem II protein D1 from Cyanidioschyzon merolae (strain NIES-3377 / 10D) (Unicellular red alga).